The chain runs to 468 residues: Ribulose bisphosphate carboxylase large chain (468 aa).

Lys4 carries the N6,N6,N6-trimethyllysine modification. Substrate-binding residues include Asn113 and Thr163. Lys165 acts as the Proton acceptor in catalysis. Lys167 is a substrate binding site. Mg(2+) is bound by residues Lys191, Asp193, and Glu194. Position 191 is an N6-carboxylysine (Lys191). The Proton acceptor role is filled by His284. Positions 285, 317, and 369 each coordinate substrate.

The protein belongs to the RuBisCO large chain family. Type I subfamily. Heterohexadecamer of 8 large chains and 8 small chains; disulfide-linked. The disulfide link is formed within the large subunit homodimers. The cofactor is Mg(2+). In terms of processing, the disulfide bond which can form in the large chain dimeric partners within the hexadecamer appears to be associated with oxidative stress and protein turnover.

It localises to the plastid. The protein resides in the chloroplast. The enzyme catalyses 2 (2R)-3-phosphoglycerate + 2 H(+) = D-ribulose 1,5-bisphosphate + CO2 + H2O. It carries out the reaction D-ribulose 1,5-bisphosphate + O2 = 2-phosphoglycolate + (2R)-3-phosphoglycerate + 2 H(+). Functionally, ruBisCO catalyzes two reactions: the carboxylation of D-ribulose 1,5-bisphosphate, the primary event in carbon dioxide fixation, as well as the oxidative fragmentation of the pentose substrate in the photorespiration process. Both reactions occur simultaneously and in competition at the same active site. The chain is Ribulose bisphosphate carboxylase large chain from Pandorea jasminoides (Bower vine).